A 700-amino-acid polypeptide reads, in one-letter code: DNA topoisomerase 1 (700 aa).

Residues 3–114 (KNLIIVESPA…TLPRIVFHEI (112 aa)) form the Toprim domain. Mg(2+)-binding residues include E9 and D83. A Topo IA-type catalytic domain is found at 130–553 (NMHSVNAQQT…EFYYPFMRKI (424 aa)). The interval 164–169 (SAGRVQ) is interaction with DNA. Y298 serves as the catalytic O-(5'-phospho-DNA)-tyrosine intermediate. 3 C4-type zinc fingers span residues 573 to 599 (CPDC…FPKC), 629 to 656 (CPSC…YPKC), and 669 to 692 (CEEC…CLKC).

It belongs to the type IA topoisomerase family. Monomer. The cofactor is Mg(2+).

The enzyme catalyses ATP-independent breakage of single-stranded DNA, followed by passage and rejoining.. Functionally, releases the supercoiling and torsional tension of DNA, which is introduced during the DNA replication and transcription, by transiently cleaving and rejoining one strand of the DNA duplex. Introduces a single-strand break via transesterification at a target site in duplex DNA. The scissile phosphodiester is attacked by the catalytic tyrosine of the enzyme, resulting in the formation of a DNA-(5'-phosphotyrosyl)-enzyme intermediate and the expulsion of a 3'-OH DNA strand. The free DNA strand then undergoes passage around the unbroken strand, thus removing DNA supercoils. Finally, in the religation step, the DNA 3'-OH attacks the covalent intermediate to expel the active-site tyrosine and restore the DNA phosphodiester backbone. This chain is DNA topoisomerase 1, found in Campylobacter jejuni subsp. jejuni serotype O:2 (strain ATCC 700819 / NCTC 11168).